The sequence spans 287 residues: Protease HtpX (287 aa).

2 helical membrane-spanning segments follow: residues 4–24 and 37–57; these read VLLF…VFNI and VGLL…SLWI. H143 contacts Zn(2+). E144 is a catalytic residue. A Zn(2+)-binding site is contributed by H147. 2 consecutive transmembrane segments (helical) span residues 158–178 and 194–214; these read LIQG…ASAI and GVVM…VMWF. E219 is a Zn(2+) binding site.

It belongs to the peptidase M48B family. It depends on Zn(2+) as a cofactor.

The protein resides in the cell inner membrane. In Idiomarina loihiensis (strain ATCC BAA-735 / DSM 15497 / L2-TR), this protein is Protease HtpX.